We begin with the raw amino-acid sequence, 329 residues long: Type 2 lactosamine alpha-2,3-sialyltransferase (329 aa).

Topologically, residues 1-4 (MKGY) are cytoplasmic. The helical; Signal-anchor for type II membrane protein transmembrane segment at 5-25 (LVAIFLSSIFLYYVLYCILWG) threads the bilayer. The Lumenal portion of the chain corresponds to 26 to 329 (TNGYWFPAEE…IKKKMVINLT (304 aa)). Residues Asn129, Asn181, Asn295, and Asn308 are each glycosylated (N-linked (GlcNAc...) asparagine).

It belongs to the glycosyltransferase 29 family.

It localises to the golgi apparatus membrane. It carries out the reaction a neolactoside nLc4Cer(d18:1(4E)) + CMP-N-acetyl-beta-neuraminate = a neolactoside IV(3)-alpha-NeuAc-nLc4Cer(d18:1(4E)) + CMP + H(+). The enzyme catalyses a beta-D-galactosyl-(1-&gt;4)-N-acetyl-beta-D-glucosaminyl derivative + CMP-N-acetyl-beta-neuraminate = an N-acetyl-alpha-neuraminyl-(2-&gt;3)-beta-D-galactosyl-(1-&gt;4)-N-acetyl-beta-D-glucosaminyl derivative + CMP + H(+). The catalysed reaction is a neolactoside nLc6Cer(d18:1(4E)) + CMP-N-acetyl-beta-neuraminate = a neolactoside VI(3)-alpha-NeuNAc-nLc6Cer(d18:1(4E)) + CMP + H(+). In terms of biological role, transfers the sialyl residue from CMP-N-acetyl-beta-neuraminate to the terminal galactose residue on sugar chains of glycoproteins and glycolipids. It's alpha-2,3-sialyltransferase activity is specific toward type II glycan chains (Galbeta1-4GlcNAc) on glycoproteins and glycolipids such as neolactosides nLc4Cer and nLc6Cer, whose sialyl-products serve as precursors for the Lewis X antigen. Critically involved in the synthesis of functional selectin ligands needed for neutrophil recruitment during inflammation and lymphocyte homing to the lymph nodes. This is Type 2 lactosamine alpha-2,3-sialyltransferase (St3gal6) from Mus musculus (Mouse).